A 278-amino-acid chain; its full sequence is Hydroxyethylthiazole kinase (278 aa).

Methionine 49 contributes to the substrate binding site. The ATP site is built by asparagine 125 and serine 171. Glycine 198 lines the substrate pocket.

Belongs to the Thz kinase family. It depends on Mg(2+) as a cofactor.

The enzyme catalyses 5-(2-hydroxyethyl)-4-methylthiazole + ATP = 4-methyl-5-(2-phosphooxyethyl)-thiazole + ADP + H(+). Its pathway is cofactor biosynthesis; thiamine diphosphate biosynthesis; 4-methyl-5-(2-phosphoethyl)-thiazole from 5-(2-hydroxyethyl)-4-methylthiazole: step 1/1. Functionally, catalyzes the phosphorylation of the hydroxyl group of 4-methyl-5-beta-hydroxyethylthiazole (THZ). In Natronomonas pharaonis (strain ATCC 35678 / DSM 2160 / CIP 103997 / JCM 8858 / NBRC 14720 / NCIMB 2260 / Gabara) (Halobacterium pharaonis), this protein is Hydroxyethylthiazole kinase.